Consider the following 333-residue polypeptide: Foldase protein PrsA (333 aa).

An N-terminal signal peptide occupies residues 1 to 22 (MKKSTKLLAGIVTLASAMTLAA). C23 is lipidated: N-palmitoyl cysteine. C23 carries the S-diacylglycerol cysteine lipid modification. Positions 145–240 (TPEMTTQVIT…NKFYIVKVTK (96 aa)) constitute a PpiC domain. The tract at residues 301–333 (DKKASKANTSKSDQKTSSDSSKDSQSSKSKSEK) is disordered. Residues 312–322 (SDQKTSSDSSK) show a composition bias toward basic and acidic residues. Over residues 323–333 (DSQSSKSKSEK) the composition is skewed to low complexity.

It belongs to the PrsA family.

It is found in the cell membrane. The catalysed reaction is [protein]-peptidylproline (omega=180) = [protein]-peptidylproline (omega=0). Functionally, plays a major role in protein secretion by helping the post-translocational extracellular folding of several secreted proteins. This chain is Foldase protein PrsA, found in Streptococcus equi subsp. zooepidemicus (strain MGCS10565).